The following is a 437-amino-acid chain: Enolase superfamily member DDB_G0284701 (437 aa).

Lysine 217 serves as the catalytic Proton acceptor. Mn(2+) is bound by residues aspartate 251, glutamate 279, and aspartate 321. Aspartate 395 serves as the catalytic Proton donor.

Belongs to the mandelate racemase/muconate lactonizing enzyme family.

The polypeptide is Enolase superfamily member DDB_G0284701 (Dictyostelium discoideum (Social amoeba)).